Consider the following 559-residue polypeptide: Aspartokinase 3, chloroplastic (559 aa).

The transit peptide at M1–C85 directs the protein to the chloroplast. ATP-binding residues include K88, G91, and S120. E204 provides a ligand contact to substrate. 2 consecutive ACT domains span residues I402–S480 and L481–S559.

It belongs to the aspartokinase family. In terms of tissue distribution, highly expressed in xylem of leaves and hypocotyls, stele of roots and in trichomes after bolting. Weak expression in veins and mesophyll cells of caulone leaves, inflorescence stems, sepals, petals and stigmata.

The protein localises to the plastid. It localises to the chloroplast. The enzyme catalyses L-aspartate + ATP = 4-phospho-L-aspartate + ADP. The protein operates within amino-acid biosynthesis; L-lysine biosynthesis via DAP pathway; (S)-tetrahydrodipicolinate from L-aspartate: step 1/4. Its pathway is amino-acid biosynthesis; L-methionine biosynthesis via de novo pathway; L-homoserine from L-aspartate: step 1/3. It participates in amino-acid biosynthesis; L-threonine biosynthesis; L-threonine from L-aspartate: step 1/5. Its activity is regulated as follows. Allosterically inhibited by lysine, but not by S-adenosyl-L-methionine (SAM). K(0.5) for lysine in the presence of physiological concentrations of substrates is 7.4 uM. No inhibition by threonine or leucine and no activation or inhibition by alanine, cysteine, isoleucine, serine, valine, methionine, glutamine, asparagine, glutamic acid or arginine. Functionally, involved in the first step of essential amino acids lysine, threonine, methionine and isoleucine synthesis via the aspartate-family pathway. The sequence is that of Aspartokinase 3, chloroplastic (AK3) from Arabidopsis thaliana (Mouse-ear cress).